An 85-amino-acid chain; its full sequence is Large ribosomal subunit protein bL27 (85 aa).

The tract at residues 1–22 (MAHKKGQGSSRNGRDSPGQHRG) is disordered.

Belongs to the bacterial ribosomal protein bL27 family.

The sequence is that of Large ribosomal subunit protein bL27 from Anaeromyxobacter sp. (strain Fw109-5).